Reading from the N-terminus, the 380-residue chain is Alkaline protease (380 aa).

The signal sequence occupies residues 1 to 27 (MKKPLGKIVASTALLISVAFSSSIASA). A propeptide spanning residues 28 to 112 (AEEAKEKYLI…EEDAEVTTMA (85 aa)) is cleaved from the precursor. The Inhibitor I9 domain maps to 34–111 (KYLIGFNEQE…IEEDAEVTTM (78 aa)). Ca(2+) is bound at residue Q113. The Peptidase S8 domain maps to 116–379 (PWGISRVQAP…SGLVNAEAAT (264 aa)). D143 acts as the Charge relay system in catalysis. D151 contacts Ca(2+). H173 serves as the catalytic Charge relay system. The Ca(2+) site is built by L184, N186, I188, V190, A274, Y276, and A279. Residue S326 is the Charge relay system of the active site.

This sequence belongs to the peptidase S8 family. Ca(2+) is required as a cofactor.

It localises to the secreted. The chain is Alkaline protease from Alkalihalobacillus alcalophilus (Bacillus alcalophilus).